Here is a 266-residue protein sequence, read N- to C-terminus: Undecaprenyl-diphosphatase (266 aa).

8 helical membrane-spanning segments follow: residues 1–21 (MTWL…FLPI), 39–59 (QGLA…MVYF), 87–107 (WAVI…DSWI), 111–131 (LRSA…LGMA), 143–163 (FTLK…IPGT), 186–206 (FSFL…GLEL), 217–237 (EIAG…HLFL), and 243–263 (IGFM…LVWL).

It belongs to the UppP family.

It localises to the cell inner membrane. It catalyses the reaction di-trans,octa-cis-undecaprenyl diphosphate + H2O = di-trans,octa-cis-undecaprenyl phosphate + phosphate + H(+). Its function is as follows. Catalyzes the dephosphorylation of undecaprenyl diphosphate (UPP). Confers resistance to bacitracin. This is Undecaprenyl-diphosphatase from Hahella chejuensis (strain KCTC 2396).